A 241-amino-acid chain; its full sequence is CRISPR-associated endoribonuclease Cas6 2 (241 aa).

The active-site Proton acceptor is the tyrosine 28. The Proton donor role is filled by histidine 40.

It belongs to the CRISPR-associated protein Cas6/Cse3/CasE family.

CRISPR (clustered regularly interspaced short palindromic repeat) is an adaptive immune system that provides protection against mobile genetic elements (viruses, transposable elements and conjugative plasmids). CRISPR clusters contain sequences complementary to antecedent mobile elements and target invading nucleic acids. CRISPR clusters are transcribed and processed into CRISPR RNA (crRNA). This protein processes pre-crRNA into individual crRNA units. In Methanocaldococcus jannaschii (strain ATCC 43067 / DSM 2661 / JAL-1 / JCM 10045 / NBRC 100440) (Methanococcus jannaschii), this protein is CRISPR-associated endoribonuclease Cas6 2 (cas6b).